A 551-amino-acid chain; its full sequence is Formate--tetrahydrofolate ligase (551 aa).

Residue 65-72 (TPAGEGKT) coordinates ATP.

Belongs to the formate--tetrahydrofolate ligase family.

The enzyme catalyses (6S)-5,6,7,8-tetrahydrofolate + formate + ATP = (6R)-10-formyltetrahydrofolate + ADP + phosphate. Its pathway is one-carbon metabolism; tetrahydrofolate interconversion. The polypeptide is Formate--tetrahydrofolate ligase (Thermosipho melanesiensis (strain DSM 12029 / CIP 104789 / BI429)).